The following is a 361-amino-acid chain: MSAAFDPSSYATQLDAKVARLRELLAPFGAPEPAVFDSPREHYRLRAEFRLWREDGQRHYAMFAQGDKHKAILIDDFPIASQRINALMPRLKAAWQASEELGNRLFQVEFLTTLAGDAMITMCYHRPLDEAWEVEARQLAEALGVSVIGRSKGKRLVIGRDYAIEELDVAGRVFSYRQPEGAFTQPNGAVNQKMLSWAFEAIGEREDDLLELYCGNGNFTLPLATRVRQVLATEISKTSVNAALSNLDENAVDNVRLVRLSAEELTQALNEVRPFRRLEGIDLKSYEFGTVFVDPPRAGMDPDTCELTRRFERILYISCNPETLAANIAQLQDTHRIERCALFDQFPYTHHMESGVLLVRR.

Residues Q185, Y213, N218, E234, and D294 each contribute to the S-adenosyl-L-methionine site. Catalysis depends on C319, which acts as the Nucleophile. E353 serves as the catalytic Proton acceptor.

The protein belongs to the class I-like SAM-binding methyltransferase superfamily. RNA M5U methyltransferase family. TrmA subfamily.

It catalyses the reaction uridine(54) in tRNA + S-adenosyl-L-methionine = 5-methyluridine(54) in tRNA + S-adenosyl-L-homocysteine + H(+). It carries out the reaction uridine(341) in tmRNA + S-adenosyl-L-methionine = 5-methyluridine(341) in tmRNA + S-adenosyl-L-homocysteine + H(+). Functionally, dual-specificity methyltransferase that catalyzes the formation of 5-methyluridine at position 54 (m5U54) in all tRNAs, and that of position 341 (m5U341) in tmRNA (transfer-mRNA). The sequence is that of tRNA/tmRNA (uracil-C(5))-methyltransferase from Pseudomonas putida (strain GB-1).